A 403-amino-acid chain; its full sequence is Na(+)/H(+) antiporter NhaA (403 aa).

The next 11 helical transmembrane spans lie at 23-43 (AFFL…PWAA), 66-86 (VAAW…ILEI), 101-121 (VALP…TYLL), 132-152 (GWAI…LALG), 161-181 (AWLM…IALF), 184-204 (GSMY…LIGA), 219-239 (GILL…AGVI), 257-277 (WVSS…FGFM), 297-317 (LGIM…ATLL), 333-353 (GMLF…LFVA), and 363-383 (IAPA…TGWF).

It belongs to the NhaA Na(+)/H(+) (TC 2.A.33) antiporter family.

The protein localises to the cell inner membrane. The enzyme catalyses Na(+)(in) + 2 H(+)(out) = Na(+)(out) + 2 H(+)(in). Functionally, na(+)/H(+) antiporter that extrudes sodium in exchange for external protons. This is Na(+)/H(+) antiporter NhaA from Gluconobacter oxydans (strain 621H) (Gluconobacter suboxydans).